A 162-amino-acid polypeptide reads, in one-letter code: uncharacterized protein (162 aa).

The 73-residue stretch at 6–78 (LDDLDRNILR…ALIVLEVGKP (73 aa)) folds into the HTH asnC-type domain. The segment at residues 25–44 (ISELSEQLKKPESTIHFRIK) is a DNA-binding region (H-T-H motif).

This is an uncharacterized protein from Pyrococcus furiosus (strain ATCC 43587 / DSM 3638 / JCM 8422 / Vc1).